The following is a 290-amino-acid chain: Zinc finger AN1 and C2H2 domain-containing stress-associated protein 16 (290 aa).

AN1-type zinc fingers lie at residues 7 to 55 (PNLG…QKDV) and 95 to 145 (VTKK…KPES). Zn(2+) is bound by residues cysteine 13, cysteine 18, cysteine 28, cysteine 31, cysteine 36, histidine 39, histidine 45, cysteine 47, cysteine 101, cysteine 106, cysteine 118, cysteine 121, cysteine 126, histidine 129, histidine 135, and cysteine 137. C2H2-type zinc fingers lie at residues 224–247 (EQCVQCPARFSTVGALIEHCEKSH) and 261–284 (DVCPKCSKAFRDPVLLVEHVERDH).

May be involved in environmental stress response. The sequence is that of Zinc finger AN1 and C2H2 domain-containing stress-associated protein 16 (SAP16) from Oryza sativa subsp. japonica (Rice).